The chain runs to 1453 residues: DNA-directed RNA polymerase IV subunit 1 (1453 aa).

Positions 56, 59, 67, 70, 97, 100, and 121 each coordinate Zn(2+). Residues Asp447, Asp449, and Asp451 each contribute to the Mg(2+) site. The bridging helix stretch occupies residues 806-818 (PLESFVHSVTSRD).

This sequence belongs to the RNA polymerase beta' chain family. Component of the RNA polymerase IV complex. Interacts with NRPD2, NRPD3, NRPD3B, NRPD4, NRPD5, NRPD5B, NRPD6A, NRPD7, NRPD7B, NRPD9A, NRPD9B, NRPD10, NRPD11, NRPD12, RDR2, RDM4, CLSY1, CLSY2, CLSY3, CLSY4 and SHH1. Mostly expressed in flowers, and, to a lower extent, in leaves.

It localises to the nucleus. It catalyses the reaction RNA(n) + a ribonucleoside 5'-triphosphate = RNA(n+1) + diphosphate. Functionally, DNA-dependent RNA polymerase catalyzes the transcription of DNA into RNA using the four ribonucleoside triphosphates as substrates. Largest and catalytic component of RNA polymerase IV which mediates 24-nt short-interfering RNAs (siRNA) accumulation. Implicated in siRNA-directed heterochromatin formation through the action of DCL3 and AGO4, and subsequent DNA methylation-dependent silencing of targeted sequences. Essential component of a self-reinforcing loop coupling de novo DNA methylation to siRNA production. Required for intercellular but not intracellular RNA interference (RNAi) leading to systemic post-transcriptional gene silencing. Involved in the maintenance of post-transcriptional RNA silencing. This Arabidopsis thaliana (Mouse-ear cress) protein is DNA-directed RNA polymerase IV subunit 1 (NRPD1).